A 118-amino-acid chain; its full sequence is MARIAGINIANHKHVVVALMDVYGIGKTRSKLICLRTNISESIKILDLTKDQLELLRCEVLKFVVEGDLRREVTLSIKRLQDLNCYRGSRHRKKLPVRGQRTKTNARTRKGPRKLMKK.

Residues 93 to 118 (KKLPVRGQRTKTNARTRKGPRKLMKK) form a disordered region.

The protein belongs to the universal ribosomal protein uS13 family. As to quaternary structure, part of the 30S ribosomal subunit. Forms a loose heterodimer with protein S19. Forms two bridges to the 50S subunit in the 70S ribosome.

Functionally, located at the top of the head of the 30S subunit, it contacts several helices of the 16S rRNA. In the 70S ribosome it contacts the 23S rRNA (bridge B1a) and protein L5 of the 50S subunit (bridge B1b), connecting the 2 subunits; these bridges are implicated in subunit movement. Contacts the tRNAs in the A and P-sites. The sequence is that of Small ribosomal subunit protein uS13 from Buchnera aphidicola subsp. Baizongia pistaciae (strain Bp).